A 381-amino-acid polypeptide reads, in one-letter code: Homoserine O-succinyltransferase (381 aa).

Positions 53 to 361 (ILICHALSGS…DSVHGHDAFL (309 aa)) constitute an AB hydrolase-1 domain. The Nucleophile role is filled by S157. A substrate-binding site is contributed by R227. Catalysis depends on residues D324 and H357. Substrate is bound at residue D358.

The protein belongs to the AB hydrolase superfamily. MetX family. Homodimer.

The protein localises to the cytoplasm. It catalyses the reaction L-homoserine + succinyl-CoA = O-succinyl-L-homoserine + CoA. It participates in amino-acid biosynthesis; L-methionine biosynthesis via de novo pathway; O-succinyl-L-homoserine from L-homoserine: step 1/1. Transfers a succinyl group from succinyl-CoA to L-homoserine, forming succinyl-L-homoserine. In Saccharophagus degradans (strain 2-40 / ATCC 43961 / DSM 17024), this protein is Homoserine O-succinyltransferase.